Consider the following 225-residue polypeptide: UPF0758 protein NMC1174 (225 aa).

Residues 102–224 (VLSDPDTVAD…VRSFRQLGLM (123 aa)) enclose the MPN domain. Residues histidine 173, histidine 175, and aspartate 186 each contribute to the Zn(2+) site. The JAMM motif motif lies at 173–186 (HNHPGGSPEPSQED).

It belongs to the UPF0758 family.

The polypeptide is UPF0758 protein NMC1174 (Neisseria meningitidis serogroup C / serotype 2a (strain ATCC 700532 / DSM 15464 / FAM18)).